The chain runs to 290 residues: Xyloglucan endotransglucosylase/hydrolase protein 9 (290 aa).

Residues 1 to 26 (MVGMDLFKCVMMIMVLVVSCGEAVSG) form the signal peptide. A GH16 domain is found at 27 to 215 (AKFDELYRSS…WSHAPFVASY (189 aa)). Asn-55 carries an N-linked (GlcNAc...) asparagine glycan. The active-site Nucleophile is the Glu-101. The active-site Proton donor is the Glu-105. Glu-105 provides a ligand contact to xyloglucan. Residue Asn-109 is glycosylated (N-linked (GlcNAc...) asparagine). Residues 118–120 (QTN), 128–130 (NRE), 194–195 (DW), and Gly-199 each bind xyloglucan. 2 disulfides stabilise this stretch: Cys-223/Cys-234 and Cys-271/Cys-284. Arg-276 serves as a coordination point for xyloglucan.

The protein belongs to the glycosyl hydrolase 16 family. XTH group 1 subfamily. Contains at least one intrachain disulfide bond essential for its enzymatic activity. Highly expressed in shoot apices. In the vegetative and reproductive phases, it accumulates in the shoot apex region, where cell division is most active. In the reproductive phase, it is also expressed in flower buds, flower stalks and internodes bearing flowers.

The protein resides in the secreted. Its subcellular location is the cell wall. The protein localises to the extracellular space. It is found in the apoplast. The catalysed reaction is breaks a beta-(1-&gt;4) bond in the backbone of a xyloglucan and transfers the xyloglucanyl segment on to O-4 of the non-reducing terminal glucose residue of an acceptor, which can be a xyloglucan or an oligosaccharide of xyloglucan.. Catalyzes xyloglucan endohydrolysis (XEH) and/or endotransglycosylation (XET). Cleaves and religates xyloglucan polymers, an essential constituent of the primary cell wall, and thereby participates in cell wall construction of growing tissues. Involved in internodal cell elongation. In Arabidopsis thaliana (Mouse-ear cress), this protein is Xyloglucan endotransglucosylase/hydrolase protein 9 (XTH9).